Consider the following 85-residue polypeptide: Photosystem I reaction center subunit PsaK (85 aa).

A run of 2 helical transmembrane segments spans residues 13-33 (VSWT…AIAI) and 59-79 (GAML…ILGL).

It belongs to the PsaG/PsaK family.

It is found in the cellular thylakoid membrane. This chain is Photosystem I reaction center subunit PsaK, found in Synechococcus sp. (strain WH7803).